The chain runs to 428 residues: Chaperone SurA (428 aa).

An N-terminal signal peptide occupies residues 1–13; sequence MLGALLLSGAVHA. 2 consecutive PpiC domains span residues 164–265 and 276–375; these read SEEF…KLLE and RDEV…EVLG. Residues 211–230 form a disordered region; it reads TSSSSENALEGGDMGWRKAA.

The protein resides in the periplasm. The catalysed reaction is [protein]-peptidylproline (omega=180) = [protein]-peptidylproline (omega=0). Its function is as follows. Chaperone involved in the correct folding and assembly of outer membrane proteins. Recognizes specific patterns of aromatic residues and the orientation of their side chains, which are found more frequently in integral outer membrane proteins. May act in both early periplasmic and late outer membrane-associated steps of protein maturation. In Pseudomonas syringae pv. syringae (strain B728a), this protein is Chaperone SurA.